We begin with the raw amino-acid sequence, 490 residues long: Cytochrome P450 2C54 (490 aa).

The residue at position 127 (Ser-127) is a Phosphoserine. An N6-acetyllysine mark is found at Lys-252 and Lys-375. Position 435 (Cys-435) interacts with heme.

Belongs to the cytochrome P450 family. Heme is required as a cofactor. Expressed in liver.

It is found in the endoplasmic reticulum membrane. It localises to the microsome membrane. It catalyses the reaction an organic molecule + reduced [NADPH--hemoprotein reductase] + O2 = an alcohol + oxidized [NADPH--hemoprotein reductase] + H2O + H(+). Metabolizes arachidonic acid mainly to 12-hydroxyeicosatetraenoic acid (HETE). This Mus musculus (Mouse) protein is Cytochrome P450 2C54.